Reading from the N-terminus, the 87-residue chain is U18-myrmicitoxin-Mri1a (87 aa).

Positions 1–32 are cleaved as a signal peptide; the sequence is MKNNYNRINTFIVYLMVTFSLISIISITECTP. An EGF-like domain is found at 33–77; it reads NHDPCPPQYAEALCLNGGTCFSVTIMGSDNYNCICAPGFRGWRCQ. 3 cysteine pairs are disulfide-bonded: C37–C52, C46–C65, and C67–C76.

In terms of processing, O-glycosylated. In terms of tissue distribution, expressed by the venom gland.

It is found in the secreted. In Manica rubida (European giant red ant), this protein is U18-myrmicitoxin-Mri1a.